A 192-amino-acid chain; its full sequence is Probable molybdenum cofactor guanylyltransferase (192 aa).

Residues leucine 8 to glycine 10, lysine 20, aspartate 69, and aspartate 94 contribute to the GTP site. Aspartate 94 is a binding site for Mg(2+).

The protein belongs to the MobA family. The cofactor is Mg(2+).

It localises to the cytoplasm. It carries out the reaction Mo-molybdopterin + GTP + H(+) = Mo-molybdopterin guanine dinucleotide + diphosphate. In terms of biological role, transfers a GMP moiety from GTP to Mo-molybdopterin (Mo-MPT) cofactor (Moco or molybdenum cofactor) to form Mo-molybdopterin guanine dinucleotide (Mo-MGD) cofactor. This is Probable molybdenum cofactor guanylyltransferase from Pyrococcus horikoshii (strain ATCC 700860 / DSM 12428 / JCM 9974 / NBRC 100139 / OT-3).